The chain runs to 36 residues: Photosystem I reaction center subunit VIII (36 aa).

The chain crosses the membrane as a helical span at residues 6 to 28; it reads LPSIFVPLVGLMFPAIAMASLSL.

It belongs to the PsaI family.

It is found in the plastid. The protein resides in the chloroplast thylakoid membrane. In terms of biological role, may help in the organization of the PsaL subunit. This Calycanthus floridus var. glaucus (Eastern sweetshrub) protein is Photosystem I reaction center subunit VIII.